We begin with the raw amino-acid sequence, 582 residues long: 2-succinyl-5-enolpyruvyl-6-hydroxy-3-cyclohexene-1-carboxylate synthase (582 aa).

It belongs to the TPP enzyme family. MenD subfamily. As to quaternary structure, homodimer. It depends on Mg(2+) as a cofactor. Mn(2+) is required as a cofactor. Thiamine diphosphate serves as cofactor.

It carries out the reaction isochorismate + 2-oxoglutarate + H(+) = 5-enolpyruvoyl-6-hydroxy-2-succinyl-cyclohex-3-ene-1-carboxylate + CO2. It functions in the pathway quinol/quinone metabolism; 1,4-dihydroxy-2-naphthoate biosynthesis; 1,4-dihydroxy-2-naphthoate from chorismate: step 2/7. It participates in cofactor biosynthesis; phylloquinone biosynthesis. In terms of biological role, catalyzes the thiamine diphosphate-dependent decarboxylation of 2-oxoglutarate and the subsequent addition of the resulting succinic semialdehyde-thiamine pyrophosphate anion to isochorismate to yield 2-succinyl-5-enolpyruvyl-6-hydroxy-3-cyclohexene-1-carboxylate (SEPHCHC). In Prochlorococcus marinus (strain MIT 9313), this protein is 2-succinyl-5-enolpyruvyl-6-hydroxy-3-cyclohexene-1-carboxylate synthase.